Reading from the N-terminus, the 581-residue chain is Arginine--tRNA ligase (581 aa).

A 'HIGH' region motif is present at residues 126-136 (PNLAKEMHVGH).

Belongs to the class-I aminoacyl-tRNA synthetase family. As to quaternary structure, monomer.

It is found in the cytoplasm. The enzyme catalyses tRNA(Arg) + L-arginine + ATP = L-arginyl-tRNA(Arg) + AMP + diphosphate. The polypeptide is Arginine--tRNA ligase (Shewanella pealeana (strain ATCC 700345 / ANG-SQ1)).